A 569-amino-acid polypeptide reads, in one-letter code: Proline--tRNA ligase (569 aa).

It belongs to the class-II aminoacyl-tRNA synthetase family. ProS type 1 subfamily. Homodimer.

The protein resides in the cytoplasm. It catalyses the reaction tRNA(Pro) + L-proline + ATP = L-prolyl-tRNA(Pro) + AMP + diphosphate. In terms of biological role, catalyzes the attachment of proline to tRNA(Pro) in a two-step reaction: proline is first activated by ATP to form Pro-AMP and then transferred to the acceptor end of tRNA(Pro). As ProRS can inadvertently accommodate and process non-cognate amino acids such as alanine and cysteine, to avoid such errors it has two additional distinct editing activities against alanine. One activity is designated as 'pretransfer' editing and involves the tRNA(Pro)-independent hydrolysis of activated Ala-AMP. The other activity is designated 'posttransfer' editing and involves deacylation of mischarged Ala-tRNA(Pro). The misacylated Cys-tRNA(Pro) is not edited by ProRS. The chain is Proline--tRNA ligase from Campylobacter jejuni (strain RM1221).